A 499-amino-acid chain; its full sequence is Glycerol kinase (499 aa).

Residue threonine 13 participates in ADP binding. Residues threonine 13, threonine 14, and serine 15 each contribute to the ATP site. Threonine 13 serves as a coordination point for sn-glycerol 3-phosphate. Arginine 17 contributes to the ADP binding site. Positions 83, 84, 135, and 245 each coordinate sn-glycerol 3-phosphate. Residues arginine 83, glutamate 84, tyrosine 135, aspartate 245, and glutamine 246 each coordinate glycerol. Residues threonine 267 and glycine 310 each coordinate ADP. Threonine 267, glycine 310, glutamine 314, and glycine 411 together coordinate ATP. Positions 411 and 415 each coordinate ADP.

Belongs to the FGGY kinase family.

The catalysed reaction is glycerol + ATP = sn-glycerol 3-phosphate + ADP + H(+). It participates in polyol metabolism; glycerol degradation via glycerol kinase pathway; sn-glycerol 3-phosphate from glycerol: step 1/1. With respect to regulation, inhibited by fructose 1,6-bisphosphate (FBP). Key enzyme in the regulation of glycerol uptake and metabolism. Catalyzes the phosphorylation of glycerol to yield sn-glycerol 3-phosphate. This is Glycerol kinase from Xanthomonas campestris pv. campestris (strain ATCC 33913 / DSM 3586 / NCPPB 528 / LMG 568 / P 25).